A 134-amino-acid chain; its full sequence is Cytochrome c-type biogenesis protein CcmE (134 aa).

Over Met1–Arg7 the chain is Cytoplasmic. A helical; Signal-anchor for type II membrane protein transmembrane segment spans residues Leu8–Lys28. The Periplasmic segment spans residues Leu29–Leu134. 2 residues coordinate heme: His120 and Tyr124.

It belongs to the CcmE/CycJ family.

It localises to the cell inner membrane. Heme chaperone required for the biogenesis of c-type cytochromes. Transiently binds heme delivered by CcmC and transfers the heme to apo-cytochromes in a process facilitated by CcmF and CcmH. This is Cytochrome c-type biogenesis protein CcmE from Ehrlichia ruminantium (strain Welgevonden).